A 595-amino-acid chain; its full sequence is Anthranilate synthase alpha subunit 1, chloroplastic (595 aa).

A chloroplast-targeting transit peptide spans 1-54; the sequence is MSSSMNVATMQALTFSRRLLPSVASRYLSSSSVTVTGYSGRSSAYAPSFRSIKC. The residue at position 55 (valine 55) is an N-acetylvaline. L-tryptophan is bound by residues serine 115 and 356 to 358; that span reads PYM. 391–392 contacts chorismate; sequence GT. A Mg(2+)-binding site is contributed by glutamate 418. Chorismate is bound by residues tyrosine 506, arginine 526, 558–560, and glycine 560; that span reads GAG. Glutamate 573 serves as a coordination point for Mg(2+).

This sequence belongs to the anthranilate synthase component I family. In terms of assembly, heterotetramer consisting of two non-identical subunits: a beta subunit and a large alpha subunit. Requires Mg(2+) as cofactor. Expressed in the central cylinder of mature primary root zones, including pericycle and early lateral root primordia, and vasculature of cotyledons.

It is found in the plastid. The protein resides in the chloroplast. It carries out the reaction chorismate + L-glutamine = anthranilate + pyruvate + L-glutamate + H(+). It functions in the pathway amino-acid biosynthesis; L-tryptophan biosynthesis; L-tryptophan from chorismate: step 1/5. Its activity is regulated as follows. Feedback inhibition by tryptophan. Part of a heterotetrameric complex that catalyzes the two-step biosynthesis of anthranilate, an intermediate in the biosynthesis of L-tryptophan. In the first step, the glutamine-binding beta subunit of anthranilate synthase (AS) provides the glutamine amidotransferase activity which generates ammonia as a substrate that, along with chorismate, is used in the second step, catalyzed by the large alpha subunit of AS to produce anthranilate. Plays an important regulatory role in auxin production via the tryptophan-dependent biosynthetic pathway. This is Anthranilate synthase alpha subunit 1, chloroplastic (ASA1) from Arabidopsis thaliana (Mouse-ear cress).